A 172-amino-acid polypeptide reads, in one-letter code: Cytidylate kinase (172 aa).

4 to 12 serves as a coordination point for ATP; sequence GPPGSGKST.

The protein belongs to the cytidylate kinase family. Type 2 subfamily.

The protein resides in the cytoplasm. The catalysed reaction is CMP + ATP = CDP + ADP. It catalyses the reaction dCMP + ATP = dCDP + ADP. The sequence is that of Cytidylate kinase (cmk) from Aeropyrum pernix (strain ATCC 700893 / DSM 11879 / JCM 9820 / NBRC 100138 / K1).